The primary structure comprises 875 residues: Valine--tRNA ligase (875 aa).

Positions 44-54 match the 'HIGH' region motif; the sequence is PNVTGKLHLGH. A 'KMSKS' region motif is present at residues 520 to 524; the sequence is KMSKS. Lysine 523 contacts ATP. Residues 804–875 adopt a coiled-coil conformation; the sequence is LEGLINIEEE…VRARLAQLKQ (72 aa).

The protein belongs to the class-I aminoacyl-tRNA synthetase family. ValS type 1 subfamily. In terms of assembly, monomer.

It is found in the cytoplasm. The catalysed reaction is tRNA(Val) + L-valine + ATP = L-valyl-tRNA(Val) + AMP + diphosphate. In terms of biological role, catalyzes the attachment of valine to tRNA(Val). As ValRS can inadvertently accommodate and process structurally similar amino acids such as threonine, to avoid such errors, it has a 'posttransfer' editing activity that hydrolyzes mischarged Thr-tRNA(Val) in a tRNA-dependent manner. This is Valine--tRNA ligase from Anoxybacillus flavithermus (strain DSM 21510 / WK1).